Here is a 509-residue protein sequence, read N- to C-terminus: ATP synthase subunit alpha (509 aa).

Residue 171-178 (GDRKTGKT) coordinates ATP.

This sequence belongs to the ATPase alpha/beta chains family. As to quaternary structure, F-type ATPases have 2 components, CF(1) - the catalytic core - and CF(0) - the membrane proton channel. CF(1) has five subunits: alpha(3), beta(3), gamma(1), delta(1), epsilon(1). CF(0) has three main subunits: a(1), b(2) and c(9-12). The alpha and beta chains form an alternating ring which encloses part of the gamma chain. CF(1) is attached to CF(0) by a central stalk formed by the gamma and epsilon chains, while a peripheral stalk is formed by the delta and b chains.

The protein localises to the cell inner membrane. The enzyme catalyses ATP + H2O + 4 H(+)(in) = ADP + phosphate + 5 H(+)(out). In terms of biological role, produces ATP from ADP in the presence of a proton gradient across the membrane. The alpha chain is a regulatory subunit. This is ATP synthase subunit alpha from Ehrlichia canis (strain Jake).